A 429-amino-acid chain; its full sequence is tRNA(Ile2) 2-agmatinylcytidine synthetase TiaS (429 aa).

A DNA-binding region (OB) is located at residues 271–343; it reads VRGKVIKKYW…LTLNLEKFYP (73 aa).

Belongs to the TiaS family.

The protein localises to the cytoplasm. It carries out the reaction cytidine(34) in tRNA(Ile2) + agmatine + ATP + H2O = 2-agmatinylcytidine(34) in tRNA(Ile2) + AMP + 2 phosphate + 2 H(+). ATP-dependent agmatine transferase that catalyzes the formation of 2-agmatinylcytidine (agm2C) at the wobble position (C34) of tRNA(Ile2), converting the codon specificity from AUG to AUA. This Thermococcus sibiricus (strain DSM 12597 / MM 739) protein is tRNA(Ile2) 2-agmatinylcytidine synthetase TiaS.